Reading from the N-terminus, the 338-residue chain is D-erythrose-4-phosphate dehydrogenase (338 aa).

Arginine 12 to isoleucine 13 contacts NAD(+). Substrate contacts are provided by residues serine 154 to threonine 156, arginine 200, threonine 213 to lysine 214, and arginine 236. Cysteine 155 acts as the Nucleophile in catalysis. Asparagine 318 contacts NAD(+).

Belongs to the glyceraldehyde-3-phosphate dehydrogenase family. Epd subfamily. As to quaternary structure, homotetramer.

The protein localises to the cytoplasm. It catalyses the reaction D-erythrose 4-phosphate + NAD(+) + H2O = 4-phospho-D-erythronate + NADH + 2 H(+). It functions in the pathway cofactor biosynthesis; pyridoxine 5'-phosphate biosynthesis; pyridoxine 5'-phosphate from D-erythrose 4-phosphate: step 1/5. In terms of biological role, catalyzes the NAD-dependent conversion of D-erythrose 4-phosphate to 4-phosphoerythronate. This is D-erythrose-4-phosphate dehydrogenase from Yersinia enterocolitica serotype O:8 / biotype 1B (strain NCTC 13174 / 8081).